Reading from the N-terminus, the 104-residue chain is Probable monothiol glutaredoxin 2 (104 aa).

Residues phenylalanine 7–glycine 104 enclose the Glutaredoxin domain. Lysine 24 is a glutathione binding site. Cysteine 32 provides a ligand contact to [2Fe-2S] cluster. Residues arginine 61, phenylalanine 73, and cysteine 86–aspartate 87 each bind glutathione.

It belongs to the glutaredoxin family. Monothiol subfamily.

The polypeptide is Probable monothiol glutaredoxin 2 (grxC2) (Rickettsia felis (strain ATCC VR-1525 / URRWXCal2) (Rickettsia azadi)).